Reading from the N-terminus, the 447-residue chain is Argininosuccinate synthase (447 aa).

Residues 17–25 and A43 contribute to the ATP site; that span reads AFSGGLDTS. Y99 lines the L-citrulline pocket. ATP contacts are provided by G129 and T131. 3 residues coordinate L-aspartate: T131, N135, and D136. N135 is an L-citrulline binding site. D136 is a binding site for ATP. Residues R139 and S192 each coordinate L-citrulline. D194 provides a ligand contact to ATP. T201, E203, and E280 together coordinate L-citrulline.

It belongs to the argininosuccinate synthase family. Type 2 subfamily. In terms of assembly, homotetramer.

The protein resides in the cytoplasm. It carries out the reaction L-citrulline + L-aspartate + ATP = 2-(N(omega)-L-arginino)succinate + AMP + diphosphate + H(+). It participates in amino-acid biosynthesis; L-arginine biosynthesis; L-arginine from L-ornithine and carbamoyl phosphate: step 2/3. The chain is Argininosuccinate synthase from Salmonella agona (strain SL483).